Reading from the N-terminus, the 177-residue chain is Large ribosomal subunit protein uL6 (177 aa).

The protein belongs to the universal ribosomal protein uL6 family. Part of the 50S ribosomal subunit.

In terms of biological role, this protein binds to the 23S rRNA, and is important in its secondary structure. It is located near the subunit interface in the base of the L7/L12 stalk, and near the tRNA binding site of the peptidyltransferase center. The polypeptide is Large ribosomal subunit protein uL6 (Shewanella baltica (strain OS223)).